The following is a 122-amino-acid chain: Basic phospholipase A2 CbII (122 aa).

Intrachain disulfides connect cysteine 26–cysteine 115, cysteine 28–cysteine 44, cysteine 43–cysteine 95, cysteine 49–cysteine 122, cysteine 50–cysteine 88, cysteine 57–cysteine 81, and cysteine 75–cysteine 86. Ca(2+) is bound by residues tyrosine 27, glycine 29, and glycine 31. The active site involves histidine 47. Ca(2+) is bound at residue aspartate 48. Residue aspartate 89 is part of the active site.

The protein belongs to the phospholipase A2 family. Group I subfamily. D49 sub-subfamily. In terms of assembly, heterodimer of an acidic subunit (CbIalpha or CbIbeta) and a basic subunit (CbII). The acidic subunit is non-toxic, and increases the toxicity of the basic subunit. It depends on Ca(2+) as a cofactor. As to expression, expressed by the venom gland.

It is found in the secreted. It catalyses the reaction a 1,2-diacyl-sn-glycero-3-phosphocholine + H2O = a 1-acyl-sn-glycero-3-phosphocholine + a fatty acid + H(+). In terms of biological role, heterodimer: presynaptic neurotoxin. Its function is as follows. Monomer: Snake venom phospholipase A2 (PLA2) that exhibits strong anticoagulant effects by binding to factor Xa (F10) and inhibiting the prothrombinase activity (IC(50) is 20 nM). PLA2 catalyzes the calcium-dependent hydrolysis of the 2-acyl groups in 3-sn-phosphoglycerides. The polypeptide is Basic phospholipase A2 CbII (Pseudocerastes fieldi (Field's horned viper)).